The primary structure comprises 189 residues: Shikimate kinase (189 aa).

Alanine 22–threonine 27 serves as a coordination point for ATP. Serine 26 is a binding site for Mg(2+). Residues aspartate 44, arginine 68, and glycine 90 each coordinate substrate. Arginine 128 provides a ligand contact to ATP. Residue arginine 147 participates in substrate binding.

This sequence belongs to the shikimate kinase family. Monomer. Requires Mg(2+) as cofactor.

The protein localises to the cytoplasm. The catalysed reaction is shikimate + ATP = 3-phosphoshikimate + ADP + H(+). Its pathway is metabolic intermediate biosynthesis; chorismate biosynthesis; chorismate from D-erythrose 4-phosphate and phosphoenolpyruvate: step 5/7. Catalyzes the specific phosphorylation of the 3-hydroxyl group of shikimic acid using ATP as a cosubstrate. This Synechococcus sp. (strain JA-3-3Ab) (Cyanobacteria bacterium Yellowstone A-Prime) protein is Shikimate kinase.